A 64-amino-acid polypeptide reads, in one-letter code: Defensin-like protein 123 (64 aa).

4 disulfides stabilise this stretch: C19–C62, C29–C49, C34–C56, and C38–C58.

The protein belongs to the DEFL family.

This chain is Defensin-like protein 123, found in Arabidopsis thaliana (Mouse-ear cress).